Consider the following 549-residue polypeptide: Glucose-6-phosphate isomerase (549 aa).

The active-site Proton donor is the Glu-353. Active-site residues include His-384 and Lys-513.

Belongs to the GPI family.

Its subcellular location is the cytoplasm. The catalysed reaction is alpha-D-glucose 6-phosphate = beta-D-fructose 6-phosphate. It participates in carbohydrate biosynthesis; gluconeogenesis. The protein operates within carbohydrate degradation; glycolysis; D-glyceraldehyde 3-phosphate and glycerone phosphate from D-glucose: step 2/4. In terms of biological role, catalyzes the reversible isomerization of glucose-6-phosphate to fructose-6-phosphate. The chain is Glucose-6-phosphate isomerase from Brucella ovis (strain ATCC 25840 / 63/290 / NCTC 10512).